The primary structure comprises 192 residues: Fe/S biogenesis protein NfuA (192 aa).

Residues cysteine 149 and cysteine 152 each contribute to the [4Fe-4S] cluster site.

It belongs to the NfuA family. Homodimer. [4Fe-4S] cluster is required as a cofactor.

Functionally, involved in iron-sulfur cluster biogenesis. Binds a 4Fe-4S cluster, can transfer this cluster to apoproteins, and thereby intervenes in the maturation of Fe/S proteins. Could also act as a scaffold/chaperone for damaged Fe/S proteins. The protein is Fe/S biogenesis protein NfuA of Idiomarina loihiensis (strain ATCC BAA-735 / DSM 15497 / L2-TR).